The chain runs to 378 residues: Trans-enoyl reductase poxP (378 aa).

62 to 65 (CDWK) contributes to the NADP(+) binding site. Residue 151 to 158 (SVFATLWI) coordinates substrate. NADP(+)-binding positions include 187–190 (STST), 210–213 (SPHN), Tyr228, and 275–276 (LE). 295-299 (GLAAS) is a binding site for substrate. 364-365 (TS) contacts NADP(+).

This sequence belongs to the zinc-containing alcohol dehydrogenase family. Monomer.

It functions in the pathway secondary metabolite biosynthesis. Trans-enoyl reductase; part of the gene cluster that mediates the biosynthesis of oxaleimides, cytotoxic compounds containing an unusual disubstituted succinimide moiety. The first step of the pathway is provided by the HR-PKS poxF that serves in a new mode of collaborative biosynthesis with the PKS-NRPS poxE, by providing the olefin containing amino acid substrate via the synthesis of an ACP-bound dec-4-enoate. The cytochrome P450 monooxygenase poxM-catalyzed oxidation at the alpha-position creates the enzyme-bound 2-hydroxydec-4-enoyl-ACP thioester, which may be prone to spontaneous hydrolysis to yield 2-hydroxydec-4-enoic acid due to increased electrophilicity of the carbonyl. 2-hydroxydec-4-enoic acid can then be further oxidized by poxM to yield the alpha-ketoacid 2-oxodec-4-enoicacid, which is reductively aminated by the aminotransferase poxL to yield (S,E)-2-aminodec-4-enoic acid. The Hybrid PKS-NRPS synthetase poxE then performs condensation between the octaketide product of its PKS modules and the amino group of (S,E)-2-aminodec-4-enoic acid which is activated and incorporated by the adenylation domain. The resulting aminoacyl product can be cyclized by the Diels-Alderase PoxQ and reductively released by the reductive (R) domain of poxE to yield an aldehyde intermediate. The released aldehyde is then substrate for a Knoevenagel condensation by the hydrolyase poxO followed by an oxidation at the 5-position of the pyrrolidone ring. The presence of the olefin from the amino acid building block allows for migration of the substituted allyl group to occur. This allylic transposition reaction takes place in a conjugate addition, semipinacol-like fashion to yield a succinimide intermediate. Iterative two-electron oxidations of the C7 methyl of the succinimide intermediate to the carboxylic acid can be catalyzed by one of two remaining cytochrome P450 monooxygenasess poxC or poxD to yield oxaleimide A. Subsequent oxidation yields the maleimide scaffold oxaleimide I. Both oxaleimide A and oxaleimide I can undergo oxidative modifications in the decalin ring to yield the series of products oxaleimides B to H. The polypeptide is Trans-enoyl reductase poxP (Penicillium oxalicum).